A 523-amino-acid polypeptide reads, in one-letter code: DELLA protein RGL3 (523 aa).

The interval 1-28 (MKRSHQETSVEEEAPSMVEKLENGCGGG) is disordered. The short motif at 34–38 (DEFLA) is the DELLA motif element. Residues 56 to 60 (LEQLE) carry the LEXLE motif motif. A VHYNP motif motif is present at residues 78–82 (VHYNP). The region spanning 148-516 (VLIEETGVRL…KPLIAASAWK (369 aa)) is the GRAS domain. The segment at 155–209 (VRLVQALVACAEAVQLENLSLADALVKRVGLLAASQAGAMGKVATYFAEALARRI) is leucine repeat I (LRI). The interval 228–293 (QMNFYDSCPY…GGPPSFRLTG (66 aa)) is VHIID. A VHIID motif is present at residues 259-263 (VHVID). Positions 305–337 (ELGWKLAQLAQAIGVEFKFNGLTTERLSDLEPD) are leucine repeat II (LRII). The interval 348-437 (LVVNSVFELH…EVYLGRQILN (90 aa)) is PFYRE. The LXXLL motif signature appears at 356–360 (LHPVL). The tract at residues 440-516 (ATEGSDRIER…KPLIAASAWK (77 aa)) is SAW.

Belongs to the GRAS family. DELLA subfamily. In terms of assembly, interacts directly with the GID2/SLY1 component of the SCF(GID2) complex, suggesting that it may be ubiquitinated. Interacts (via N-terminus) with GID1A, GID1B and GID1B (via N-terminus). Interacts with the BOI proteins BOI, BRG1, BRG2 and BRG3. Post-translationally, phosphorylated. In terms of processing, may be ubiquitinated. Expressed at very low level. Mainly expressed in germinating seeds and flowers and siliques. Not expressed in other tissues.

The protein resides in the nucleus. Probable transcriptional regulator that acts as a repressor of the gibberellin (GA) signaling pathway. No effect of the BOI proteins on its stability. Probably acts by participating in large multiprotein complexes that repress transcription of GA-inducible genes. Its activity may be regulated by phytohormones such as auxin and ethylene. The sequence is that of DELLA protein RGL3 (RGL3) from Arabidopsis thaliana (Mouse-ear cress).